The primary structure comprises 357 residues: NADH-quinone oxidoreductase subunit H (357 aa).

Transmembrane regions (helical) follow at residues 26-46 (LVKI…LTLW), 92-112 (ALFV…WAVI), 127-147 (LLFV…AGWA), 164-184 (MISY…VTGS), 203-223 (GLTF…IYII), 259-279 (FFLA…LMFL), 294-314 (VPGW…FIWF), and 329-349 (LGWK…AIWM).

The protein belongs to the complex I subunit 1 family. As to quaternary structure, NDH-1 is composed of 14 different subunits. Subunits NuoA, H, J, K, L, M, N constitute the membrane sector of the complex.

Its subcellular location is the cell inner membrane. It carries out the reaction a quinone + NADH + 5 H(+)(in) = a quinol + NAD(+) + 4 H(+)(out). Its function is as follows. NDH-1 shuttles electrons from NADH, via FMN and iron-sulfur (Fe-S) centers, to quinones in the respiratory chain. The immediate electron acceptor for the enzyme in this species is believed to be ubiquinone. Couples the redox reaction to proton translocation (for every two electrons transferred, four hydrogen ions are translocated across the cytoplasmic membrane), and thus conserves the redox energy in a proton gradient. This subunit may bind ubiquinone. The protein is NADH-quinone oxidoreductase subunit H of Janthinobacterium sp. (strain Marseille) (Minibacterium massiliensis).